The chain runs to 692 residues: Sodium- and chloride-dependent glycine transporter 1 (692 aa).

The interval 1–34 (MIGGDTRAASAHPGMASAQGPVATPSPEQPFPGT) is disordered. The Cytoplasmic segment spans residues 1–94 (MIGGDTRAAS…TRGNWGNQIE (94 aa)). The next 3 membrane-spanning stretches (helical) occupy residues 95–115 (FVLT…FPYL), 122–142 (GAFM…LFFM), and 174–194 (VSTY…YYFF). Over 195 to 271 (SSMTHVLPWA…LSDDIGNFGE (77 aa)) the chain is Extracellular. 9 consecutive transmembrane segments (helical) span residues 272-292 (VRLP…LCLI), 301-321 (VVYF…VRGV), 346-366 (VWGD…GGLI), 393-413 (SVYA…HLGV), 436-456 (LLPI…LLGL), 492-512 (VAGF…WLLL), 516-536 (YAAS…IMYI), 556-576 (LFFQ…ILIF), and 596-616 (VAIG…YALF). Residues 617–692 (QLCRTDGDTL…GSSRFQDSRI (76 aa)) are Cytoplasmic-facing. T657 is subject to Phosphothreonine. A phosphoserine mark is found at S659 and S684. The essential for interaction with EXOC1 stretch occupies residues 681 to 692 (SNGSSRFQDSRI).

It belongs to the sodium:neurotransmitter symporter (SNF) (TC 2.A.22) family. SLC6A9 subfamily. Interacts with EXOC1; interaction increases the transporter capacity of SLC6A9 probably by promoting its insertion into the cell membrane. Interacts with EXOC3 and EXOC4. As to expression, expressed in the brain (at protein level). At 11 dpc, expressed in the ventral part of the ventricular zone. At 15 dpc, also expressed in adjacent mantle tissue and the meninges. Strongly expressed in 12 dpc and 15 dpc liver. In terms of tissue distribution, expressed in the brain.

Its subcellular location is the cell membrane. The catalysed reaction is glycine(out) + chloride(out) + 2 Na(+)(out) = glycine(in) + chloride(in) + 2 Na(+)(in). Sodium- and chloride-dependent glycine transporter which is essential for regulating glycine concentrations at inhibitory glycinergic synapses. Functionally, sodium- and chloride-dependent glycine transporter. The chain is Sodium- and chloride-dependent glycine transporter 1 (Slc6a9) from Mus musculus (Mouse).